We begin with the raw amino-acid sequence, 279 residues long: Fatty acid desaturase 4-like 2, chloroplastic (279 aa).

The transit peptide at 1–30 directs the protein to the chloroplast; it reads MATSLQTKYTLNPITNNIPRSHRPSFLRVT. 3 consecutive transmembrane segments (helical) span residues 68–90, 98–118, and 178–198; these read LWVA…GAFG, SLAG…YHWA, and VVHG…LFHA.

The protein belongs to the fatty acid desaturase CarF family.

It localises to the plastid. It is found in the chloroplast membrane. Its pathway is lipid metabolism; fatty acid metabolism. Functionally, fatty acid desaturase involved in the production of chloroplast-specific phosphatidylglycerol molecular species. Catalyzes the formation of a trans double bond introduced close to the carboxyl group of palmitic acid, which is specifically esterified to the sn-2 glyceryl carbon of phosphatidylglycerol. This chain is Fatty acid desaturase 4-like 2, chloroplastic (FAD4L2), found in Arabidopsis thaliana (Mouse-ear cress).